A 181-amino-acid polypeptide reads, in one-letter code: Mannose-specific lectin (181 aa).

Positions 1–30 (MGRTTSSPKAMMRIATVAAILTILASTCMA) are cleaved as a signal peptide. Residues 31-140 (RNVLTNGEGL…DIWSTGTYRR (110 aa)) enclose the Bulb-type lectin domain. 20 residues coordinate alpha-D-mannopyranose: Q56, D58, N60, Y64, W71, A72, N74, Q88, D90, N92, Y96, V103, W104, N107, N114, Q120, D122, N124, Y128, and W133. C59 and C83 are oxidised to a cystine.

In terms of assembly, homodimer.

Its subcellular location is the secreted. Mannose-specific lectin. Shows agglutinating activity towards rabbit erythrocytes. However, it does not show agglutinating activity towards human erythrocytes. Has insecticidal activity against the cotton leafworm S.littoralis and the peach potato aphid M.persicae. Also displays antiviral activity and therefore may contribute to defense against infections. The sequence is that of Mannose-specific lectin from Allium sativum (Garlic).